We begin with the raw amino-acid sequence, 468 residues long: Keratin, type I cytoskeletal 26 (468 aa).

Residues 1-82 are head; it reads MSFRLSGGSR…GNEHSLLSGN (82 aa). Positions 83 to 118 are coil 1A; that stretch reads EKVTMQNLNDRLASYLDHVHALEEANADLEQKIKGW. The region spanning 83-398 is the IF rod domain; the sequence is EKVTMQNLND…NLLDGEERKS (316 aa). The tract at residues 119-140 is linker 1; that stretch reads YEKCEPGSSREHDHDYSRYFSV. Positions 141-232 are coil 1B; it reads IEDLKRQIIS…KSHEEEMEVL (92 aa). The interval 233–255 is linker 12; that stretch reads QYTAGGNVNVEMNATPGVDLTVL. The interval 256–394 is coil 2; that stretch reads LNNMRAEYED…DIYCNLLDGE (139 aa). The interval 395 to 465 is tail; it reads ERKSKSTCYK…NITVEQRVPS (71 aa).

Belongs to the intermediate filament family. As to quaternary structure, heterotetramer of two type I and two type II keratins. As to expression, strongly expressed in skin and scalp, and weak expression observed in thymus and tongue. In the hair follicle, expression is restricted to the mid- to upper inner root sheath cuticle, being present slightly above the apex of the dermal papilla (at protein level).

The polypeptide is Keratin, type I cytoskeletal 26 (Homo sapiens (Human)).